The following is a 261-amino-acid chain: Serine acetyltransferase (261 aa).

The protein belongs to the transferase hexapeptide repeat family.

The protein resides in the cytoplasm. The enzyme catalyses L-serine + acetyl-CoA = O-acetyl-L-serine + CoA. It participates in amino-acid biosynthesis; L-cysteine biosynthesis; L-cysteine from L-serine: step 1/2. The sequence is that of Serine acetyltransferase (cysE) from Buchnera aphidicola subsp. Schizaphis graminum (strain Sg).